The chain runs to 49 residues: Agglutinin-1 (49 aa).

In terms of assembly, homooligomer. Glycosylated.

Functionally, beta-galactoside specific lectin. Has a hemagglutinating activity on erythrocytes. This is Agglutinin-1 from Pomacea flagellata (Apple snail).